We begin with the raw amino-acid sequence, 80 residues long: U-actitoxin-Avd9b (80 aa).

The first 20 residues, 1–20 (MNLKVLAVFVLCAILVVVTA), serve as a signal peptide directing secretion. A propeptide spanning residues 21–39 (ERRGTETGGYKKDTLQDLK) is cleaved from the precursor. The 36-residue stretch at 45-80 (CFDRYREAACTSDNIRLLCKTSAKYQINCKKSCGLC) folds into the ShKT domain. 3 disulfide bridges follow: cysteine 45–cysteine 80, cysteine 54–cysteine 73, and cysteine 63–cysteine 77. The interval 68–69 (KY) is crucial for binding to potassium channels.

Belongs to the sea anemone type 1 potassium channel toxin family. Type 1b subfamily.

It is found in the secreted. The protein resides in the nematocyst. Inhibits voltage-gated potassium channels (Kv1/KCNA). This Anemonia viridis (Snakelocks anemone) protein is U-actitoxin-Avd9b.